The sequence spans 535 residues: Cytochrome P450 monooxygenase atE (535 aa).

Residue C455 coordinates heme.

It belongs to the cytochrome P450 family. Heme is required as a cofactor.

It catalyses the reaction 3-methylcatechol + AH2 + O2 = 3-methylbenzene-1,2,4-triol + A + H2O. It participates in secondary metabolite biosynthesis. In terms of biological role, cytochrome P450 monooxygenase; part of the gene cluster that mediates the biosynthesis of terreic acid, a quinone epoxide inhibitor of Bruton's tyrosine kinase. The first step of the pathway is the synthesis of 6-methylsalicylic acid (6-MSA) by the 6-methylsalicylic acid synthase atX. In the biosynthesis of 6-MSA, atX utilizes one acetyl-CoA and three malonyl-CoAs as its substrates and catalyzes a series of programmed reactions including Claisen condensation, reduction, aldol cyclization, and the hydrolytic cleavage that yields 6-MSA. The 6-methylsalicylate 1-monooxygenase atA then catalyzes the decarboxylative hydroxylation of 6-MSA to 3-methylcatechol. The next step is the conversion of 3-methylcatechol to 3-methyl-1,2,4-benzenetriol by cytochrome P450 monooxygenase atE, which is enhanced by cytochrome P450 monooxygenase atG. Then, the epoxidase atD catalyzes the epoxidation and hydroxyl oxidation of 3-methyl-1,2,4-benzenetriol to terremutin. Lastly, GMC oxidoreductase atC oxidizes terremutin to terreic acid. In Aspergillus terreus (strain NIH 2624 / FGSC A1156), this protein is Cytochrome P450 monooxygenase atE.